The sequence spans 250 residues: L-cystine transport system ATP-binding protein TcyN (250 aa).

Residues 4–244 (IEVKNLVKKF…PEQPRTRQFL (241 aa)) enclose the ABC transporter domain. 36–43 (GPSGSGKT) lines the ATP pocket.

Belongs to the ABC transporter superfamily. As to quaternary structure, the complex is composed of two ATP-binding proteins (TcyN), two transmembrane proteins (TcyL) and a solute-binding protein (TcyJ).

The protein resides in the cell inner membrane. It catalyses the reaction L-cystine(out) + ATP + H2O = L-cystine(in) + ADP + phosphate + H(+). The enzyme catalyses D-cystine(out) + ATP + H2O = D-cystine(in) + ADP + phosphate + H(+). Its activity is regulated as follows. The TcyJLN system is inhibited by L-cystine, L-cysteine, DL-2,6-diaminopimelic acid and L-cystathionine, and is stimulated by D-cysteine. Part of the ABC transporter complex TcyJLN involved in L-cystine import. This high affinity cystine transporter is involved in resistance to oxidative stress by forming a L-cysteine/L-cystine shuttle system with the EamA transporter, which exports L-cysteine as reducing equivalents to the periplasm to prevent the cells from oxidative stress. Exported L-cysteine can reduce the periplasmic hydrogen peroxide to water, and then generated L-cystine is imported back into the cytoplasm via the TcyJLN complex. Functions at low cystine concentrations. The system can also transport L-cysteine, diaminopimelic acid (DAP), djenkolate, lanthionine, D-cystine, homocystine, and it mediates accumulation of the toxic compounds L-selenaproline (SCA) and L-selenocystine (SeCys). Could also facilitate threonine efflux. Responsible for energy coupling to the transport system. This Escherichia coli (strain K12) protein is L-cystine transport system ATP-binding protein TcyN.